The chain runs to 421 residues: UDP-N-acetylglucosamine 1-carboxyvinyltransferase 1 (421 aa).

22–23 (KN) contributes to the phosphoenolpyruvate binding site. Residue Arg95 participates in UDP-N-acetyl-alpha-D-glucosamine binding. The active-site Proton donor is Cys119. Cys119 bears the 2-(S-cysteinyl)pyruvic acid O-phosphothioketal mark. UDP-N-acetyl-alpha-D-glucosamine-binding positions include 124–128 (RPIEQ), Asp308, and Val330.

It belongs to the EPSP synthase family. MurA subfamily.

It localises to the cytoplasm. The enzyme catalyses phosphoenolpyruvate + UDP-N-acetyl-alpha-D-glucosamine = UDP-N-acetyl-3-O-(1-carboxyvinyl)-alpha-D-glucosamine + phosphate. Its pathway is cell wall biogenesis; peptidoglycan biosynthesis. Its function is as follows. Cell wall formation. Adds enolpyruvyl to UDP-N-acetylglucosamine. This chain is UDP-N-acetylglucosamine 1-carboxyvinyltransferase 1, found in Staphylococcus aureus (strain MRSA252).